The sequence spans 480 residues: Ftsk domain-containing protein YdcQ (480 aa).

2 consecutive transmembrane segments (helical) span residues 25 to 45 (VKLA…FLFW) and 71 to 91 (SVLC…FLLF). In terms of domain architecture, FtsK spans 217–399 (MKHISWQFDK…LGLMSDTGYG (183 aa)). 234–241 (GGTGGGKT) contributes to the ATP binding site.

It localises to the cell membrane. In Bacillus subtilis (strain 168), this protein is Ftsk domain-containing protein YdcQ (ydcQ).